A 341-amino-acid chain; its full sequence is Guanine nucleotide-binding protein subunit beta (341 aa).

WD repeat units lie at residues G54–D84, L96–S126, G142–D171, G183–D213, G225–D255, N269–D299, and G311–N341.

This sequence belongs to the WD repeat G protein beta family. G proteins are composed of 3 units, alpha, beta and gamma.

Functionally, guanine nucleotide-binding proteins (G proteins) are involved as a modulator or transducer in various transmembrane signaling systems. The beta and gamma chains are required for the GTPase activity, for replacement of GDP by GTP, and for G protein-effector interaction. The sequence is that of Guanine nucleotide-binding protein subunit beta from Lymnaea stagnalis (Great pond snail).